A 550-amino-acid chain; its full sequence is MRVAVAGCCHGELDKIYETLALAERRGSGPVDLLLCCGDFQAVRNEADLRCMAVPPKYRHMQTFYRYYSGEKKAPVLTIFIGGNHEASNHLQELPYGGWVAPNIYYLGLAGVVKYRGVRIGGISGIFKSHDYRKGHFECPPYNSSTIRSIYHVRNIEVYKLKQLKQPVHIFLSHDWPRNIYHYGNKKQLLKTKSFFRQEVENSTLGSPAASELLEHLQPAYWFSAHLHVKFAALMQHQATDKDQAGKETKFLALDKCLPHRDFLQVLEIEHDPSAPEYLEYDVEWLTVLRATDDLINVTGGLWNMPEDNGLHTRWDYSATEETMKEVMEKLNHDPKVPCNFTMTAACYDPSKPQTQVKLVHRINPQTTEFCAQLGITDINVMIQKAREEEHHQCGEYEQQGDPGTEESEEDRSEYNTDTSALSSINPDEIMLDEEEEEEEEEEEAVSAHSDMNTPSVEPASDQASDLSTSFSDIRNLPSSMFVSSDDASRSPASGEGKCGETVESGDEKDLAKFPLKRLSDEHEPEQRKKIKRRNQAIYAAVDDGDASAE.

Cys8 and His10 together coordinate a divalent metal cation. Phosphoserine is present on Ser28. A divalent metal cation is bound by residues Asp39 and Asn84. Positions 124–154 (SGIFKSHDYRKGHFECPPYNSSTIRSIYHVR) are lariat recognition loop. Lys128 bears the N6-acetyllysine mark. Residues His174, His226, and His228 each contribute to the a divalent metal cation site. The interval 390 to 550 (EHHQCGEYEQ…AVDDGDASAE (161 aa)) is disordered. The segment covering 416–426 (NTDTSALSSIN) has biased composition (polar residues). The segment covering 430 to 445 (IMLDEEEEEEEEEEEA) has biased composition (acidic residues). Over residues 450-483 (SDMNTPSVEPASDQASDLSTSFSDIRNLPSSMFV) the composition is skewed to polar residues. Phosphoserine occurs at positions 470, 480, 484, 485, 489, 491, 494, 505, and 520. A compositionally biased stretch (basic and acidic residues) spans 498-528 (KCGETVESGDEKDLAKFPLKRLSDEHEPEQR).

It belongs to the lariat debranching enzyme family. Requires Fe(2+) as cofactor. Zn(2+) is required as a cofactor. It depends on Mn(2+) as a cofactor.

The protein localises to the nucleus. Active in presence of diverse metals including Fe(2+), Zn(2+), Mn(2+). Also activated by Ca(2+). Binds two metal cations in two adjacent alpha and beta metal-binding pockets. In terms of biological role, cleaves the 2'-5' phosphodiester linkage at the branch point of excised lariat intron RNA and converts them into linear molecules that can be subsequently degraded, thereby facilitating ribonucleotide turnover. Linked to its role in pre-mRNA processing mechanism, may also participate in retrovirus replication and have an antiviral cell-intrinsic defense function. In Mus musculus (Mouse), this protein is Lariat debranching enzyme (Dbr1).